Reading from the N-terminus, the 150-residue chain is Endoribonuclease YbeY (150 aa).

Residues His116, His120, and His126 each contribute to the Zn(2+) site.

It belongs to the endoribonuclease YbeY family. It depends on Zn(2+) as a cofactor.

Its subcellular location is the cytoplasm. Its function is as follows. Single strand-specific metallo-endoribonuclease involved in late-stage 70S ribosome quality control and in maturation of the 3' terminus of the 16S rRNA. This is Endoribonuclease YbeY from Beutenbergia cavernae (strain ATCC BAA-8 / DSM 12333 / CCUG 43141 / JCM 11478 / NBRC 16432 / NCIMB 13614 / HKI 0122).